A 253-amino-acid chain; its full sequence is 3-deoxy-manno-octulosonate cytidylyltransferase (253 aa).

Belongs to the KdsB family.

Its subcellular location is the cytoplasm. It carries out the reaction 3-deoxy-alpha-D-manno-oct-2-ulosonate + CTP = CMP-3-deoxy-beta-D-manno-octulosonate + diphosphate. The protein operates within nucleotide-sugar biosynthesis; CMP-3-deoxy-D-manno-octulosonate biosynthesis; CMP-3-deoxy-D-manno-octulosonate from 3-deoxy-D-manno-octulosonate and CTP: step 1/1. Its pathway is bacterial outer membrane biogenesis; lipopolysaccharide biosynthesis. In terms of biological role, activates KDO (a required 8-carbon sugar) for incorporation into bacterial lipopolysaccharide in Gram-negative bacteria. The sequence is that of 3-deoxy-manno-octulosonate cytidylyltransferase from Neisseria meningitidis serogroup A / serotype 4A (strain DSM 15465 / Z2491).